The following is a 73-amino-acid chain: Sec-independent protein translocase protein TatA (73 aa).

The chain crosses the membrane as a helical span at residues 1–21 (MGSFSIWHWVIVLVVVVLIFG). A disordered region spans residues 43–73 (MKSEGEDAAQTPPAAQKEGGRVIDAEPADKK). Basic and acidic residues predominate over residues 60–73 (EGGRVIDAEPADKK).

It belongs to the TatA/E family. The Tat system comprises two distinct complexes: a TatABC complex, containing multiple copies of TatA, TatB and TatC subunits, and a separate TatA complex, containing only TatA subunits. Substrates initially bind to the TatABC complex, which probably triggers association of the separate TatA complex to form the active translocon.

Its subcellular location is the cell inner membrane. Functionally, part of the twin-arginine translocation (Tat) system that transports large folded proteins containing a characteristic twin-arginine motif in their signal peptide across membranes. TatA could form the protein-conducting channel of the Tat system. The polypeptide is Sec-independent protein translocase protein TatA (Laribacter hongkongensis (strain HLHK9)).